The following is a 384-amino-acid chain: Omega-6 fatty acid desaturase, endoplasmic reticulum (384 aa).

Residues Met1–Arg23 are disordered. Positions Lys14–Arg23 are enriched in basic and acidic residues. Helical transmembrane passes span Leu56–Leu76 and Val84–Ala104. Positions His105 to His109 match the Histidine box-1 motif. Residues Trp117 to Trp137 traverse the membrane as a helical segment. The Histidine box-2 motif lies at His141 to His145. 3 consecutive transmembrane segments (helical) span residues Val180 to Gly200, Ile226 to Ala246, and Val253 to Leu273. A Histidine box-3 motif is present at residues His316–His320.

This sequence belongs to the fatty acid desaturase type 1 family.

The protein localises to the endoplasmic reticulum membrane. The protein operates within lipid metabolism; polyunsaturated fatty acid biosynthesis. Its function is as follows. ER (microsomal) omega-6 fatty acid desaturase introduces the second double bond in the biosynthesis of 18:3 fatty acids, important constituents of plant membranes. It is thought to use cytochrome b5 as an electron donor and to act on fatty acids esterified to phosphatidylcholine and, possibly, other phospholipids. The polypeptide is Omega-6 fatty acid desaturase, endoplasmic reticulum (Brassica juncea (Indian mustard)).